We begin with the raw amino-acid sequence, 647 residues long: tRNA uridine 5-carboxymethylaminomethyl modification enzyme MnmG (647 aa).

Residues 22–27, Val134, and Ser189 contribute to the FAD site; that span reads GAGHAG. Residue 283 to 297 participates in NAD(+) binding; the sequence is GARYCPSIEDKIMRF. Gln380 is an FAD binding site.

It belongs to the MnmG family. As to quaternary structure, homodimer. Heterotetramer of two MnmE and two MnmG subunits. Requires FAD as cofactor.

It localises to the cytoplasm. In terms of biological role, NAD-binding protein involved in the addition of a carboxymethylaminomethyl (cmnm) group at the wobble position (U34) of certain tRNAs, forming tRNA-cmnm(5)s(2)U34. This Desulfotalea psychrophila (strain LSv54 / DSM 12343) protein is tRNA uridine 5-carboxymethylaminomethyl modification enzyme MnmG.